Reading from the N-terminus, the 562-residue chain is MIIVSTELNKISKRLTQDPSQPASQAMMYGAGFTDEDMKKPIVGIGSTGFDGNTCNMHLNILAGQVKGSITRGGMVGLGFNTIGVSDGISMGTEGMRFSLVSRDVIADSIETICEAHYYDALVTVVGCDKNMPGALIAMARLNRPSIMVYGGTIHSGHYKGEKLNIVSAFEALGKKVAGTITEEDYQGVIKNACPGAGACGGMYTANTMASAIEAMGLTLPYSSTAPATSEKKKAETLALGKAMMHLLEKDIKPRDIMTFEAFENAIRVILVLGGSTNAVMHLIAIAKAAGVKLTIDDFQRIGNTTPLLADLKPSGKYMMEDMDAIGGVPSVMRLLAKHNLLHLDCMTVTGKTVGENLKEAQDLPTDQDLMYAWENPIKQTGHLQILYGNLAPQGSVAKITGKEGTYFEGPARVYDSEEAVNKGLEANEVKSGEVIVIRYVGPKGGPGMPEMLKPTALLMGLGLGNECALITDGRFSGGTHGFVVGHITPEATEGGMIGLVKNGDIIRIDAVNRVLEVKISEEEVTKRRAAWVKPAPRATSGVLYKYMKLVSSASEGCVTDN.

Cys55 contributes to the [2Fe-2S] cluster binding site. Asp87 is a binding site for Mg(2+). Cys128 provides a ligand contact to [2Fe-2S] cluster. Residues Asp129 and Lys130 each contribute to the Mg(2+) site. At Lys130 the chain carries N6-carboxylysine. Cys200 serves as a coordination point for [2Fe-2S] cluster. Residue Glu451 coordinates Mg(2+). Ser477 acts as the Proton acceptor in catalysis.

This sequence belongs to the IlvD/Edd family. As to quaternary structure, homodimer. Requires [2Fe-2S] cluster as cofactor. The cofactor is Mg(2+).

The catalysed reaction is (2R)-2,3-dihydroxy-3-methylbutanoate = 3-methyl-2-oxobutanoate + H2O. It catalyses the reaction (2R,3R)-2,3-dihydroxy-3-methylpentanoate = (S)-3-methyl-2-oxopentanoate + H2O. Its pathway is amino-acid biosynthesis; L-isoleucine biosynthesis; L-isoleucine from 2-oxobutanoate: step 3/4. The protein operates within amino-acid biosynthesis; L-valine biosynthesis; L-valine from pyruvate: step 3/4. Its function is as follows. Functions in the biosynthesis of branched-chain amino acids. Catalyzes the dehydration of (2R,3R)-2,3-dihydroxy-3-methylpentanoate (2,3-dihydroxy-3-methylvalerate) into 2-oxo-3-methylpentanoate (2-oxo-3-methylvalerate) and of (2R)-2,3-dihydroxy-3-methylbutanoate (2,3-dihydroxyisovalerate) into 2-oxo-3-methylbutanoate (2-oxoisovalerate), the penultimate precursor to L-isoleucine and L-valine, respectively. The chain is Dihydroxy-acid dehydratase from Cytophaga hutchinsonii (strain ATCC 33406 / DSM 1761 / CIP 103989 / NBRC 15051 / NCIMB 9469 / D465).